Here is a 401-residue protein sequence, read N- to C-terminus: Probable aspartate/prephenate aminotransferase (401 aa).

G39, W125, and N175 together coordinate L-aspartate. An N6-(pyridoxal phosphate)lysine modification is found at K239. Residue R375 participates in L-aspartate binding.

Belongs to the class-I pyridoxal-phosphate-dependent aminotransferase family. Homodimer. Pyridoxal 5'-phosphate is required as a cofactor.

It is found in the cytoplasm. It catalyses the reaction L-aspartate + 2-oxoglutarate = oxaloacetate + L-glutamate. It carries out the reaction L-arogenate + 2-oxoglutarate = prephenate + L-glutamate. Its function is as follows. Catalyzes the reversible conversion of aspartate and 2-oxoglutarate to glutamate and oxaloacetate. Can also transaminate prephenate in the presence of glutamate. The protein is Probable aspartate/prephenate aminotransferase (aatA) of Rickettsia conorii (strain ATCC VR-613 / Malish 7).